Reading from the N-terminus, the 549-residue chain is Cation/acetate symporter ActP (549 aa).

Transmembrane regions (helical) follow at residues 33 to 53 (WQAI…TYWA), 77 to 97 (LAIA…ALVF), 103 to 123 (GLIY…LIAE), 148 to 168 (ILSA…QMVG), 183 to 203 (IAVV…GMLA), 206 to 226 (WVQI…AFMV), 262 to 282 (ISAL…PHIL), 303 to 323 (GFMG…IMLV), 355 to 375 (LFLG…VAGL), 404 to 424 (VSKI…VLFE), 428 to 448 (IAFM…PIIL), 464 to 484 (GGWL…TIWV), and 493 to 513 (IFPY…GIWF).

Belongs to the sodium:solute symporter (SSF) (TC 2.A.21) family.

It localises to the cell inner membrane. In terms of biological role, transports acetate. This is Cation/acetate symporter ActP from Salmonella gallinarum (strain 287/91 / NCTC 13346).